The primary structure comprises 330 residues: Aspartate--ammonia ligase (330 aa).

It belongs to the class-II aminoacyl-tRNA synthetase family. AsnA subfamily.

It is found in the cytoplasm. The enzyme catalyses L-aspartate + NH4(+) + ATP = L-asparagine + AMP + diphosphate + H(+). The protein operates within amino-acid biosynthesis; L-asparagine biosynthesis; L-asparagine from L-aspartate (ammonia route): step 1/1. The protein is Aspartate--ammonia ligase of Escherichia coli O17:K52:H18 (strain UMN026 / ExPEC).